A 193-amino-acid polypeptide reads, in one-letter code: MFKNEITNLQNHFLVAMPTLQDPLFKKSVVYICEHNDTGAMGIVINKPVEKYTVETILKNLKITSTQRDPSVQLNHPVFSGGPLLNDRGFILHTPQTGFGSSINISSQTMITTSKDILETLGTPNQPKNILVALGYSGWTKGQLEQELIESTWIAVPADETILFHTPIFNRWNAAAKIIGVNMYNMNSQTGHA.

Belongs to the UPF0301 (AlgH) family.

The chain is UPF0301 protein Bfl251 from Blochmanniella floridana.